We begin with the raw amino-acid sequence, 537 residues long: DNA-directed primase/polymerase protein (537 aa).

Residues 1 to 22 (MLRKWEARVKQIEERASHYERK) adopt a coiled-coil conformation. Substrate-binding positions include Arg-76, 114–116 (DLE), 165–169 (KFSRH), 270–273 (RNFR), and Lys-279. Mn(2+) is bound by residues Asp-114 and Glu-116. 4 residues coordinate Zn(2+): Cys-401, His-408, Cys-428, and Cys-433. The Zinc knuckle motif motif lies at 401–434 (CENIGRAHKSNNIMILVDLKNEVWYQKCHDPVCK). The segment at 462–481 (SGETDDTSTSLTKDSQTPPS) is disordered. Residues 462-536 (SGETDDTSTS…DELIIEALQN (75 aa)) are interaction with RPA1. Positions 468–478 (TSTSLTKDSQT) are enriched in low complexity. Short sequence motifs (RPA1-binding motif) lie at residues 494 to 507 (WDDEDDALFLEATE) and 524 to 532 (DIPDELIIE).

This sequence belongs to the eukaryotic-type primase small subunit family. In terms of assembly, interacts with RPA1; leading to recruitment to chromatin and stimulate DNA primase activity. Interacts with SSBP1. Interacts with POLDIP2; leading to enhance DNA polymerase activity. Mn(2+) serves as cofactor.

It localises to the nucleus. The protein resides in the mitochondrion matrix. It is found in the chromosome. The catalysed reaction is ssDNA + n NTP = ssDNA/pppN(pN)n-1 hybrid + (n-1) diphosphate.. It carries out the reaction DNA(n) + a 2'-deoxyribonucleoside 5'-triphosphate = DNA(n+1) + diphosphate. Functionally, DNA primase and DNA polymerase required to tolerate replication-stalling lesions by bypassing them. Required to facilitate mitochondrial and nuclear replication fork progression by initiating de novo DNA synthesis using dNTPs and acting as an error-prone DNA polymerase able to bypass certain DNA lesions. Shows a high capacity to tolerate DNA damage lesions such as 8oxoG and abasic sites in DNA. Provides different translesion synthesis alternatives when DNA replication is stalled: able to synthesize DNA primers downstream of lesions, such as ultraviolet (UV) lesions, R-loops and G-quadruplexes, to allow DNA replication to continue. Can also realign primers ahead of 'unreadable lesions' such as abasic sites and 6-4 photoproduct (6-4 pyrimidine-pyrimidinone), thereby skipping the lesion. Repriming avoids fork degradation while leading to accumulation of internal ssDNA gaps behind the forks. Also able to incorporate nucleotides opposite DNA lesions such as 8oxoG, like a regular translesion synthesis DNA polymerase. Also required for reinitiating stalled forks after UV damage during nuclear DNA replication. Required for mitochondrial DNA (mtDNA) synthesis and replication, by reinitiating synthesis after UV damage or in the presence of chain-terminating nucleotides. Prevents APOBEC family-mediated DNA mutagenesis by repriming downstream of abasic site to prohibit error-prone translesion synthesis. Has non-overlapping function with POLH. In addition to its role in DNA damage response, also required to maintain efficient nuclear and mitochondrial DNA replication in unperturbed cells. The chain is DNA-directed primase/polymerase protein from Mus musculus (Mouse).